The following is a 539-amino-acid chain: Protein Wnt-4 (539 aa).

The N-terminal stretch at 1–21 (MPSPTGVFVLMILTHLSFGLG) is a signal peptide. Residues 34–77 (QNGDLDSSNPAIHHQQHQQHQQHQQHQQHQSNHNLNNGNMNSTI) are disordered. Residues 51–74 (QQHQQHQQHQQHQSNHNLNNGNMN) show a composition bias toward low complexity. Residues Asn74 and Asn284 are each glycosylated (N-linked (GlcNAc...) asparagine). Intrachain disulfides connect Cys274–Cys285, Cys322–Cys330, Cys332–Cys349, Cys397–Cys411, and Cys399–Cys406. The O-palmitoleoyl serine; by PORCN moiety is linked to residue Ser403. Asn419 carries an N-linked (GlcNAc...) asparagine glycan. Residues 436–463 (APNQRSMRQVSSSRMKKPKQRRKKPQQS) are disordered. Low complexity predominate over residues 439–448 (QRSMRQVSSS). Over residues 449 to 460 (RMKKPKQRRKKP) the composition is skewed to basic residues. Intrachain disulfides connect Cys478/Cys497, Cys486/Cys492, Cys496/Cys538, Cys512/Cys529, Cys514/Cys526, and Cys521/Cys522.

Belongs to the Wnt family. In terms of processing, palmitoleoylated by porcupine. The lipid group functions as a sorting signal, targeting the ligand to polarized vesicles that transport Wnt4 to unique sites at the cell surface. Depalmitoleoylated by notum, leading to inhibit Wnt signaling pathway.

Its subcellular location is the secreted. It localises to the extracellular space. The protein localises to the extracellular matrix. Functionally, binds as a ligand to a family of frizzled seven-transmembrane receptors and acts through a cascade of genes on the nucleus. Acts downstream of homeotic complex genes in the visceral mesoderm and is required for embryonic segmentation. Also required for cell movement and FAK regulation during ovarian morphogenesis. The chain is Protein Wnt-4 (Wnt4) from Drosophila melanogaster (Fruit fly).